The sequence spans 258 residues: HLA class II histocompatibility antigen, DP beta 1 chain (258 aa).

A signal peptide spans 1 to 29 (MMVLQVSAAPRTVALTALLMVLLTSVVQG). The beta-1 stretch occupies residues 30-121 (RATPENYLFQ…LGGPMTLQRR (92 aa)). The Extracellular portion of the chain corresponds to 30–225 (RATPENYLFQ…KAQSDSARSK (196 aa)). Disulfide bonds link cysteine 44-cysteine 106 and cysteine 144-cysteine 200. An N-linked (GlcNAc...) asparagine glycan is attached at asparagine 48. The interval 122-215 (VQPRVNVSPS…SLDSPVTVEW (94 aa)) is beta-2. The Ig-like C1-type domain occupies 124 to 212 (PRVNVSPSKK…EHTSLDSPVT (89 aa)). The interval 216 to 225 (KAQSDSARSK) is connecting peptide. A helical membrane pass occupies residues 226–246 (TLTGAGGFVLGLIICGVGIFM). Topologically, residues 247–258 (HRRSKKVQRGSA) are cytoplasmic.

Belongs to the MHC class II family. As to quaternary structure, heterodimer of an alpha and a beta subunit; also referred as MHC class II molecule. In the endoplasmic reticulum (ER) it forms a heterononamer; 3 MHC class II molecules bind to a CD74 homotrimer (also known as invariant chain or HLA class II histocompatibility antigen gamma chain). In the endosomal/lysosomal system; CD74 undergoes sequential degradation by various proteases; leaving a small fragment termed CLIP on each MHC class II molecule. MHC class II molecule interacts with HLA_DM, and HLA_DO in B-cells, in order to release CLIP and facilitate the binding of antigenic peptides.

The protein localises to the cell membrane. It is found in the endoplasmic reticulum membrane. Its subcellular location is the golgi apparatus. The protein resides in the trans-Golgi network membrane. It localises to the endosome membrane. The protein localises to the lysosome membrane. Its function is as follows. Binds peptides derived from antigens that access the endocytic route of antigen presenting cells (APC) and presents them on the cell surface for recognition by the CD4 T-cells. The peptide binding cleft accommodates peptides of 10-30 residues. The peptides presented by MHC class II molecules are generated mostly by degradation of proteins that access the endocytic route, where they are processed by lysosomal proteases and other hydrolases. Exogenous antigens that have been endocytosed by the APC are thus readily available for presentation via MHC II molecules, and for this reason this antigen presentation pathway is usually referred to as exogenous. As membrane proteins on their way to degradation in lysosomes as part of their normal turn-over are also contained in the endosomal/lysosomal compartments, exogenous antigens must compete with those derived from endogenous components. Autophagy is also a source of endogenous peptides, autophagosomes constitutively fuse with MHC class II loading compartments. In addition to APCs, other cells of the gastrointestinal tract, such as epithelial cells, express MHC class II molecules and CD74 and act as APCs, which is an unusual trait of the GI tract. To produce a MHC class II molecule that presents an antigen, three MHC class II molecules (heterodimers of an alpha and a beta chain) associate with a CD74 trimer in the ER to form a heterononamer. Soon after the entry of this complex into the endosomal/lysosomal system where antigen processing occurs, CD74 undergoes a sequential degradation by various proteases, including CTSS and CTSL, leaving a small fragment termed CLIP (class-II-associated invariant chain peptide). The removal of CLIP is facilitated by HLA-DM via direct binding to the alpha-beta-CLIP complex so that CLIP is released. HLA-DM stabilizes MHC class II molecules until primary high affinity antigenic peptides are bound. The MHC II molecule bound to a peptide is then transported to the cell membrane surface. In B-cells, the interaction between HLA-DM and MHC class II molecules is regulated by HLA-DO. Primary dendritic cells (DCs) also to express HLA-DO. Lysosomal microenvironment has been implicated in the regulation of antigen loading into MHC II molecules, increased acidification produces increased proteolysis and efficient peptide loading. The sequence is that of HLA class II histocompatibility antigen, DP beta 1 chain (HLA-DPB1) from Homo sapiens (Human).